Here is a 510-residue protein sequence, read N- to C-terminus: Probable RNA-binding protein 46 (510 aa).

Positions glutamate 23–proline 42 are disordered. The segment covering glycine 31 to proline 42 has biased composition (pro residues). 3 RRM domains span residues arginine 45–aspartate 123, cysteine 125–proline 207, and arginine 220–proline 292.

Expressed in the testis and ovary.

The protein localises to the cytoplasm. Functionally, essential for male and female fertility, playing a crucial role in regulating germ cell development by ensuring the proper progression of meiosis prophase I. The polypeptide is Probable RNA-binding protein 46 (rbm46) (Danio rerio (Zebrafish)).